Reading from the N-terminus, the 224-residue chain is Ribonuclease 3 (224 aa).

An RNase III domain is found at 4–126; the sequence is LDRLQRQISY…IIGAISLDSS (123 aa). Residue Glu-39 participates in Mg(2+) binding. Asp-43 is an active-site residue. Residues Asp-112 and Glu-115 each coordinate Mg(2+). Residue Glu-115 is part of the active site. A DRBM domain is found at 153 to 223; the sequence is DPKTRLQEYL…AEQILTALEI (71 aa).

The protein belongs to the ribonuclease III family. As to quaternary structure, homodimer. The cofactor is Mg(2+).

The protein resides in the cytoplasm. It catalyses the reaction Endonucleolytic cleavage to 5'-phosphomonoester.. Functionally, digests double-stranded RNA. Involved in the processing of primary rRNA transcript to yield the immediate precursors to the large and small rRNAs (23S and 16S). Processes some mRNAs, and tRNAs when they are encoded in the rRNA operon. Processes pre-crRNA and tracrRNA of type II CRISPR loci if present in the organism. The polypeptide is Ribonuclease 3 (Mannheimia succiniciproducens (strain KCTC 0769BP / MBEL55E)).